We begin with the raw amino-acid sequence, 324 residues long: Fructose-1,6-bisphosphatase class 1 (324 aa).

Residues glutamate 88, aspartate 107, leucine 109, and aspartate 110 each coordinate Mg(2+). Substrate-binding positions include aspartate 110–serine 113, asparagine 199, and lysine 265. Glutamate 271 is a binding site for Mg(2+).

It belongs to the FBPase class 1 family. Homotetramer. Mg(2+) is required as a cofactor.

Its subcellular location is the cytoplasm. The catalysed reaction is beta-D-fructose 1,6-bisphosphate + H2O = beta-D-fructose 6-phosphate + phosphate. It functions in the pathway carbohydrate biosynthesis; gluconeogenesis. The protein is Fructose-1,6-bisphosphatase class 1 of Neisseria meningitidis serogroup B (strain ATCC BAA-335 / MC58).